Reading from the N-terminus, the 290-residue chain is Sodium/potassium-transporting ATPase subunit beta-2 (290 aa).

Residues 1 to 39 (MVIQKEKKSCGQVVEEWKEFVWNPRTHQFMGRTGTSWAF) lie on the Cytoplasmic side of the membrane. A helical; Signal-anchor for type II membrane protein membrane pass occupies residues 40 to 67 (ILLFYLVFYGFLTAMFTLTMWVMLQTVS). At 68 to 290 (EHTPKYQDRL…VAFKLRINKT (223 aa)) the chain is on the extracellular side. Residues asparagine 96 and asparagine 118 are each glycosylated (N-linked (GlcNAc...) asparagine). A disulfide bridge links cysteine 129 with cysteine 150. N-linked (GlcNAc...) asparagine glycans are attached at residues asparagine 153 and asparagine 159. Cysteine 160 and cysteine 177 are oxidised to a cystine. Residues asparagine 193, asparagine 197, and asparagine 238 are each glycosylated (N-linked (GlcNAc...) asparagine). Residues 193–290 (NQSMNVTCAG…VAFKLRINKT (98 aa)) are immunoglobulin-like. Cysteines 200 and 261 form a disulfide.

Belongs to the X(+)/potassium ATPases subunit beta family. The sodium/potassium-transporting ATPase is composed of a catalytic alpha subunit, an auxiliary non-catalytic beta subunit and an additional regulatory subunit. Interacts with BSG.

The protein localises to the cell membrane. Its function is as follows. This is the non-catalytic component of the active enzyme, which catalyzes the hydrolysis of ATP coupled with the exchange of Na(+) and K(+) ions across the plasma membrane. The exact function of the beta-2 subunit is not known. In terms of biological role, mediates cell adhesion of neurons and astrocytes, and promotes neurite outgrowth. This is Sodium/potassium-transporting ATPase subunit beta-2 (ATP1B2) from Oryctolagus cuniculus (Rabbit).